A 30-amino-acid polypeptide reads, in one-letter code: Kalata-B10 (30 aa).

Positions 1 to 30 (GLPTCGETCFGGTCNTPGCSCSSWPICTRD) form a cross-link, cyclopeptide (Gly-Asp). Disulfide bonds link Cys-5-Cys-19, Cys-9-Cys-21, and Cys-14-Cys-27.

Belongs to the cyclotide family. Moebius subfamily. This peptide occurs in both cyclic and linear forms. The linear form contains unmodified Trp-24, the cyclic peptide occurs in two forms with unmodified Trp-24, and with Trp-24 oxidized to form oxindolylalanine. Oxidation is enhanced by exposure to sunlight.

Probably participates in a plant defense mechanism. The polypeptide is Kalata-B10 (Oldenlandia affinis).